A 273-amino-acid chain; its full sequence is Shikimate dehydrogenase (NADP(+)) (273 aa).

Shikimate-binding positions include 14–16 (SKS) and T61. The Proton acceptor role is filled by K65. NADP(+) is bound at residue D77. Residues N86 and D102 each coordinate shikimate. NADP(+)-binding positions include 127 to 131 (GAGGA), 151 to 156 (NRTGAR), and M215. Residue Y217 participates in shikimate binding. G239 contacts NADP(+).

Belongs to the shikimate dehydrogenase family. As to quaternary structure, homodimer.

The catalysed reaction is shikimate + NADP(+) = 3-dehydroshikimate + NADPH + H(+). It functions in the pathway metabolic intermediate biosynthesis; chorismate biosynthesis; chorismate from D-erythrose 4-phosphate and phosphoenolpyruvate: step 4/7. Involved in the biosynthesis of the chorismate, which leads to the biosynthesis of aromatic amino acids. Catalyzes the reversible NADPH linked reduction of 3-dehydroshikimate (DHSA) to yield shikimate (SA). The chain is Shikimate dehydrogenase (NADP(+)) from Thioalkalivibrio sulfidiphilus (strain HL-EbGR7).